The following is a 259-amino-acid chain: ATP synthase subunit a (259 aa).

The next 6 helical transmembrane spans lie at 37-57 (LSITNSTIWMWLAVAVAFLFM), 101-121 (YFPAIFTLFLLVLFCNLLGLI), 131-151 (LVVTATLALSVFFFATGLAIV), 157-177 (FIGFFVPSGVPPMLLILMVPI), 203-223 (VLAIMFFFAATLPLGGLLMPA), and 232-252 (FELFIGFIQAYIFTILTCVYI).

The protein belongs to the ATPase A chain family. As to quaternary structure, F-type ATPases have 2 components, CF(1) - the catalytic core - and CF(0) - the membrane proton channel. CF(1) has five subunits: alpha(3), beta(3), gamma(1), delta(1), epsilon(1). CF(0) has three main subunits: a(1), b(2) and c(9-12). The alpha and beta chains form an alternating ring which encloses part of the gamma chain. CF(1) is attached to CF(0) by a central stalk formed by the gamma and epsilon chains, while a peripheral stalk is formed by the delta and b chains.

It localises to the cell inner membrane. Key component of the proton channel; it plays a direct role in the translocation of protons across the membrane. This chain is ATP synthase subunit a, found in Magnetococcus marinus (strain ATCC BAA-1437 / JCM 17883 / MC-1).